The chain runs to 238 residues: Ribonuclease PH (238 aa).

Phosphate-binding positions include arginine 86 and 124 to 126 (GTR).

It belongs to the RNase PH family. Homohexameric ring arranged as a trimer of dimers.

It carries out the reaction tRNA(n+1) + phosphate = tRNA(n) + a ribonucleoside 5'-diphosphate. In terms of biological role, phosphorolytic 3'-5' exoribonuclease that plays an important role in tRNA 3'-end maturation. Removes nucleotide residues following the 3'-CCA terminus of tRNAs; can also add nucleotides to the ends of RNA molecules by using nucleoside diphosphates as substrates, but this may not be physiologically important. Probably plays a role in initiation of 16S rRNA degradation (leading to ribosome degradation) during starvation. This chain is Ribonuclease PH, found in Acinetobacter baumannii (strain AB307-0294).